The sequence spans 360 residues: Protein RecA (360 aa).

Residue 66–73 (GPESSGKT) coordinates ATP. A disordered region spans residues 330–360 (DAKAIEERENPEKVKQDKEVPVNKDASDEKK).

Belongs to the RecA family.

The protein resides in the cytoplasm. Can catalyze the hydrolysis of ATP in the presence of single-stranded DNA, the ATP-dependent uptake of single-stranded DNA by duplex DNA, and the ATP-dependent hybridization of homologous single-stranded DNAs. It interacts with LexA causing its activation and leading to its autocatalytic cleavage. The polypeptide is Protein RecA (Lactobacillus johnsonii (strain CNCM I-12250 / La1 / NCC 533)).